A 517-amino-acid chain; its full sequence is Protein ERGIC-53 (517 aa).

Residues 1-30 form the signal peptide; the sequence is MAVSRRRVPQAGARSFFCALLLSFSQFTGS. At 31–484 the chain is on the lumenal side; the sequence is DGTGGDAAAP…DLPPFPSCLS (454 aa). In terms of domain architecture, L-type lectin-like spans 52 to 275; sequence RRFEYKYSFK…DVLSFLTFQL (224 aa). Residues Ser-96 and Asp-129 each contribute to the a carbohydrate site. Ca(2+) is bound by residues Asp-160, Phe-162, and Asn-164. The a carbohydrate site is built by Asn-164 and His-186. Residue Asp-189 coordinates Ca(2+). An intrachain disulfide couples Cys-198 to Cys-238. 259-261 is an a carbohydrate binding site; that stretch reads GGL. Position 433 is a phosphoserine (Ser-433). A helical membrane pass occupies residues 485 to 505; sequence TIHFVIFVVVQTVLFVGYIMY. Residues 506 to 517 lie on the Cytoplasmic side of the membrane; it reads RTQQEAAAKKFF. The interval 506–517 is mediates interaction with RAB3GAP1, RAB3GAP2 and UBXN6; it reads RTQQEAAAKKFF. The ER export motif motif lies at 516-517; the sequence is FF.

Exists both as a covalent disulfide-linked homohexamer, and a complex of three disulfide-linked dimers non-covalently kept together. Interacts with MCFD2. May interact with TMEM115. Interacts with RAB3GAP1 and RAB3GAP2. Interacts with UBXN6. Interacts with SERPINA1/alpha1-antitrypsin. Interacts with BET1.

Its subcellular location is the endoplasmic reticulum-Golgi intermediate compartment membrane. The protein localises to the golgi apparatus membrane. It is found in the endoplasmic reticulum membrane. Its function is as follows. Mannose-specific lectin. May recognize sugar residues of glycoproteins, glycolipids, or glycosylphosphatidyl inositol anchors and may be involved in the sorting or recycling of proteins, lipids, or both. The LMAN1-MCFD2 complex forms a specific cargo receptor for the ER-to-Golgi transport of selected proteins. In Mus musculus (Mouse), this protein is Protein ERGIC-53 (Lman1).